The primary structure comprises 485 residues: Alpha-amylase (485 aa).

Positions 1–18 (MFLTSVLILCSLAALSLG) are cleaved as a signal peptide. Q19 is modified (pyrrolidone carboxylic acid). A disulfide bridge links C46 with C102. Ca(2+) contacts are provided by N116, R164, and D173. An intrachain disulfide couples C152 to C166. R201 is a binding site for chloride. D203 functions as the Nucleophile in the catalytic mechanism. H207 is a Ca(2+) binding site. The active-site Proton donor is E240. Chloride contacts are provided by N303 and R339. C439 and C451 are joined by a disulfide. An N-linked (GlcNAc...) asparagine glycan is attached at N448.

This sequence belongs to the glycosyl hydrolase 13 family. As to quaternary structure, monomer. Ca(2+) is required as a cofactor. It depends on chloride as a cofactor. As to expression, expressed in larval and adult gut.

It localises to the secreted. The catalysed reaction is Endohydrolysis of (1-&gt;4)-alpha-D-glucosidic linkages in polysaccharides containing three or more (1-&gt;4)-alpha-linked D-glucose units.. The protein is Alpha-amylase of Phaedon cochleariae (Mustard beetle).